A 242-amino-acid polypeptide reads, in one-letter code: 1-(5-phosphoribosyl)-5-[(5-phosphoribosylamino)methylideneamino] imidazole-4-carboxamide isomerase (242 aa).

D10 (proton acceptor) is an active-site residue. D132 acts as the Proton donor in catalysis.

This sequence belongs to the HisA/HisF family.

Its subcellular location is the cytoplasm. The catalysed reaction is 1-(5-phospho-beta-D-ribosyl)-5-[(5-phospho-beta-D-ribosylamino)methylideneamino]imidazole-4-carboxamide = 5-[(5-phospho-1-deoxy-D-ribulos-1-ylimino)methylamino]-1-(5-phospho-beta-D-ribosyl)imidazole-4-carboxamide. It functions in the pathway amino-acid biosynthesis; L-histidine biosynthesis; L-histidine from 5-phospho-alpha-D-ribose 1-diphosphate: step 4/9. This is 1-(5-phosphoribosyl)-5-[(5-phosphoribosylamino)methylideneamino] imidazole-4-carboxamide isomerase from Methanopyrus kandleri (strain AV19 / DSM 6324 / JCM 9639 / NBRC 100938).